The chain runs to 359 residues: Fructose-bisphosphate aldolase class 2 (359 aa).

Residue Ser-50 participates in D-glyceraldehyde 3-phosphate binding. The active-site Proton donor is the Asp-83. Zn(2+) contacts are provided by His-84, Asp-105, Glu-142, and His-198. Residue Gly-199 coordinates dihydroxyacetone phosphate. Residue His-232 coordinates Zn(2+). Dihydroxyacetone phosphate is bound by residues Gly-233 to Ser-235 and Asn-275 to Thr-278.

Belongs to the class II fructose-bisphosphate aldolase family. It depends on Zn(2+) as a cofactor.

The catalysed reaction is beta-D-fructose 1,6-bisphosphate = D-glyceraldehyde 3-phosphate + dihydroxyacetone phosphate. It functions in the pathway carbohydrate degradation; glycolysis; D-glyceraldehyde 3-phosphate and glycerone phosphate from D-glucose: step 4/4. Functionally, catalyzes the aldol condensation of dihydroxyacetone phosphate (DHAP or glycerone-phosphate) with glyceraldehyde 3-phosphate (G3P) to form fructose 1,6-bisphosphate (FBP) in gluconeogenesis and the reverse reaction in glycolysis. The polypeptide is Fructose-bisphosphate aldolase class 2 (fbaA) (Synechocystis sp. (strain ATCC 27184 / PCC 6803 / Kazusa)).